The chain runs to 216 residues: Trimethylamine corrinoid protein 1 (216 aa).

A B12-binding N-terminal domain is found at 1 to 92; that stretch reads MASKEEIIAK…EMEKRKSETK (92 aa). The B12-binding domain occupies 94 to 216; that stretch reads LGTVVIGTIE…VVSKVRAVLL (123 aa). Histidine 107 contributes to the methylcob(III)alamin binding site.

It belongs to the methylamine corrinoid protein family. As to quaternary structure, can form a complex with MttB.

The protein operates within one-carbon metabolism; methanogenesis from trimethylamine. Its function is as follows. Acts probably as a methyl group carrier between MttB and either MtbA or MtaA. The polypeptide is Trimethylamine corrinoid protein 1 (mttC1) (Methanosarcina acetivorans (strain ATCC 35395 / DSM 2834 / JCM 12185 / C2A)).